The sequence spans 410 residues: PHAF1 protein At3g51130 (410 aa).

It belongs to the PHAF1 family.

This Arabidopsis thaliana (Mouse-ear cress) protein is PHAF1 protein At3g51130.